The following is a 125-amino-acid chain: Ribosome-binding factor A (125 aa).

This sequence belongs to the RbfA family. In terms of assembly, monomer. Binds 30S ribosomal subunits, but not 50S ribosomal subunits or 70S ribosomes.

The protein resides in the cytoplasm. Functionally, one of several proteins that assist in the late maturation steps of the functional core of the 30S ribosomal subunit. Associates with free 30S ribosomal subunits (but not with 30S subunits that are part of 70S ribosomes or polysomes). Required for efficient processing of 16S rRNA. May interact with the 5'-terminal helix region of 16S rRNA. This Kosmotoga olearia (strain ATCC BAA-1733 / DSM 21960 / TBF 19.5.1) protein is Ribosome-binding factor A.